A 546-amino-acid chain; its full sequence is Alpha-taxilin (546 aa).

2 disordered regions span residues 1-170 (MKNQ…GLGK) and 482-546 (NKRV…SARA). Positions 11 to 21 (AKQSNPKSSPG) are enriched in polar residues. Basic and acidic residues-rich tracts occupy residues 70–80 (DVSEELSRQLE) and 143–158 (EEIRQSDEVGDRDHRR). Phosphoserine is present on S72. A coiled-coil region spans residues 186 to 491 (EEKLAALCKK…NKRVQDLSAG (306 aa)). S515 carries the phosphoserine modification. Positions 530–546 (TEASGQTGPQEPTSARA) are enriched in polar residues.

This sequence belongs to the taxilin family. Binds to the C-terminal coiled coil region of syntaxin family members STX1A, STX3A and STX4A, but not when these proteins are complexed with SNAP25, VAMP2 or STXBP1, suggesting that it interacts with syntaxins that do not form the SNARE complex. Ubiquitous, with much higher expression in heart, kidney, liver and pancreas.

Its function is as follows. May be involved in intracellular vesicle traffic and potentially in calcium-dependent exocytosis in neuroendocrine cells. In Homo sapiens (Human), this protein is Alpha-taxilin (TXLNA).